The primary structure comprises 698 residues: MPPLKVHAPYEPRGDQPQAIAQLVNGLNSGLVHQTLLGATGTGKTHTIARVIEQVQRPTLVMAHNKTLAAQLYAEFKEFFPENAVGYFVSYYDAYTPEAYVPSKDLYIEKEAQINEEIDRLRHEATQALFTRSDVIIVASVSAIYGLGSPTDYGQVALKLKTGEIRNRDKVLRTLIDLQFERNDLDFHRGTFRVRGDTLEIFPANAESAFRIEMWGDEIERMVEVDPLTGEILTQKDHIEVFPAKHFIPNADKMQAAIGDIRLELEQQLAHLEGEGKVLEAARLKQRTLYDLEIMEELGYCSGIENYSRHMDRRSEGQTPWTLLDYFPDDFLLVIDESHISVPQIRGMFNGDRSRKQTLVDFGFRLPSALDNRPLMFDEFSKHVHQAIYVSATPGVYEYQHHEQVVEQIIRPTGLLDPMVEVRRTRGQIDDLLGEIKRRVDTGSRVLVTTLTKRMAEDLTDYLKEMGVRTQYLHSDVDTIERIDILRDLRLGVFDVLVGINLLREGLDLPEVSLVAILDADKAGFLRSESSLVQIIGRAARHIDGTVLMYADTITPAMDYAISETRRRRQIQERYNQQHGIEPKGIVKAVRDLTEGMKKVAEKPAAYQTAANPDSMTKEELFKVINALEKQMKQAAKDLEFEKAALLRDQLTEMRQTLALIDNTALLESVNRKPRAKAAMVVEDTGKRKVKGRSRGKL.

Residues 25–183 form the Helicase ATP-binding domain; sequence NGLNSGLVHQ…TLIDLQFERN (159 aa). 38–45 lines the ATP pocket; that stretch reads GATGTGKT. The Beta-hairpin motif lies at 91 to 114; the sequence is YYDAYTPEAYVPSKDLYIEKEAQI. Residues 428–594 form the Helicase C-terminal domain; sequence QIDDLLGEIK…GIVKAVRDLT (167 aa). A UVR domain is found at 622 to 657; it reads FKVINALEKQMKQAAKDLEFEKAALLRDQLTEMRQT.

The protein belongs to the UvrB family. Forms a heterotetramer with UvrA during the search for lesions. Interacts with UvrC in an incision complex.

It is found in the cytoplasm. The UvrABC repair system catalyzes the recognition and processing of DNA lesions. A damage recognition complex composed of 2 UvrA and 2 UvrB subunits scans DNA for abnormalities. Upon binding of the UvrA(2)B(2) complex to a putative damaged site, the DNA wraps around one UvrB monomer. DNA wrap is dependent on ATP binding by UvrB and probably causes local melting of the DNA helix, facilitating insertion of UvrB beta-hairpin between the DNA strands. Then UvrB probes one DNA strand for the presence of a lesion. If a lesion is found the UvrA subunits dissociate and the UvrB-DNA preincision complex is formed. This complex is subsequently bound by UvrC and the second UvrB is released. If no lesion is found, the DNA wraps around the other UvrB subunit that will check the other stand for damage. The polypeptide is UvrABC system protein B (Herpetosiphon aurantiacus (strain ATCC 23779 / DSM 785 / 114-95)).